The sequence spans 153 residues: NAD(P)H-quinone oxidoreductase subunit N (153 aa).

It belongs to the complex I NdhN subunit family. NDH-1 can be composed of about 15 different subunits; different subcomplexes with different compositions have been identified which probably have different functions.

It is found in the cellular thylakoid membrane. The catalysed reaction is a plastoquinone + NADH + (n+1) H(+)(in) = a plastoquinol + NAD(+) + n H(+)(out). It catalyses the reaction a plastoquinone + NADPH + (n+1) H(+)(in) = a plastoquinol + NADP(+) + n H(+)(out). Its function is as follows. NDH-1 shuttles electrons from an unknown electron donor, via FMN and iron-sulfur (Fe-S) centers, to quinones in the respiratory and/or the photosynthetic chain. The immediate electron acceptor for the enzyme in this species is believed to be plastoquinone. Couples the redox reaction to proton translocation, and thus conserves the redox energy in a proton gradient. Cyanobacterial NDH-1 also plays a role in inorganic carbon-concentration. This is NAD(P)H-quinone oxidoreductase subunit N from Prochlorococcus marinus (strain MIT 9211).